A 208-amino-acid polypeptide reads, in one-letter code: Mediator of RNA polymerase II transcription subunit 18 (208 aa).

This sequence belongs to the Mediator complex subunit 18 family. In terms of assembly, component of the Mediator complex.

The protein resides in the nucleus. Its function is as follows. Component of the Mediator complex, a coactivator involved in the regulated transcription of nearly all RNA polymerase II-dependent genes. Mediator functions as a bridge to convey information from gene-specific regulatory proteins to the basal RNA polymerase II transcription machinery. Mediator is recruited to promoters by direct interactions with regulatory proteins and serves as a scaffold for the assembly of a functional preinitiation complex with RNA polymerase II and the general transcription factors. The protein is Mediator of RNA polymerase II transcription subunit 18 (med18) of Danio rerio (Zebrafish).